The primary structure comprises 440 residues: MERVERENGCFHTFCPIASVAWLHRKIKDSFFLIVGTHTCAHFIQTALDVMVYAHSRFGFAVLEESDLVSASPTEELGKVVQQVVDEWHPKVIFVLSTCSVDILKMDLEVSCKDLSTRFGFPVLPASTSGIDRSFTQGEDAVLHALLPFVPKEAPAVEPVEEKKPRWFSFGKESEKEKAEPARNLVLIGAVTDSTIQQLQWELKQLGLPKVDVFPDGDIRKMPVINEQTVVVPLQPYLNDTLATIRRERRAKVLSTVFPIGPDGTARFLEAICLEFGLDTSRIKEKEAQAWRDLEPQLQILRGKKIMFLGDNLLELPLARFLTSCDVQVVEAGTPYIHSKDLQQELELLKERDVRIVESPDFTKQLQRMQEYKPDLVVAGLGICNPLEAMGFTTAWSIEFTFAQIHGFVNAIDLIKLFTKPLLKRQALMEHGWAEAGWLE.

3 residues coordinate [4Fe-4S] cluster: cysteine 15, cysteine 40, and cysteine 99.

Belongs to the BchN/ChlN family. As to quaternary structure, protochlorophyllide reductase is composed of three subunits; BchL, BchN and BchB. Forms a heterotetramer of two BchB and two BchN subunits. It depends on [4Fe-4S] cluster as a cofactor.

It carries out the reaction chlorophyllide a + oxidized 2[4Fe-4S]-[ferredoxin] + 2 ADP + 2 phosphate = protochlorophyllide a + reduced 2[4Fe-4S]-[ferredoxin] + 2 ATP + 2 H2O. It participates in porphyrin-containing compound metabolism; bacteriochlorophyll biosynthesis (light-independent). Component of the dark-operative protochlorophyllide reductase (DPOR) that uses Mg-ATP and reduced ferredoxin to reduce ring D of protochlorophyllide (Pchlide) to form chlorophyllide a (Chlide). This reaction is light-independent. The NB-protein (BchN-BchB) is the catalytic component of the complex. The protein is Light-independent protochlorophyllide reductase subunit N of Heliobacterium mobile (Heliobacillus mobilis).